A 196-amino-acid chain; its full sequence is Protein LURP-one-related 8 (196 aa).

This sequence belongs to the LOR family.

Might be related to the phospholipid scramblase and tubby-like superfamily of membrane tethered transcription factors. The protein is Protein LURP-one-related 8 of Arabidopsis thaliana (Mouse-ear cress).